The primary structure comprises 343 residues: Fanconi anemia group F protein (343 aa).

As to quaternary structure, belongs to the multisubunit FA complex composed of FANCA, FANCB, FANCC, FANCE, FANCF, FANCG, FANCL/PHF9 and FANCM. In complex with FANCA, FANCG and FANCL, but not with FANCC, nor FANCE, interacts with HES1; this interaction may be essential for the stability and nuclear localization of FA core complex proteins.

The protein resides in the nucleus. In terms of biological role, DNA repair protein that may operate in a postreplication repair or a cell cycle checkpoint function. May be implicated in interstrand DNA cross-link repair and in the maintenance of normal chromosome stability. This is Fanconi anemia group F protein from Mus musculus (Mouse).